Reading from the N-terminus, the 203-residue chain is Small ribosomal subunit protein uS4 (203 aa).

The region spanning 93–153 (RRFDNVVFRA…PKSKNMSAVS (61 aa)) is the S4 RNA-binding domain.

Belongs to the universal ribosomal protein uS4 family. Part of the 30S ribosomal subunit. Contacts protein S5. The interaction surface between S4 and S5 is involved in control of translational fidelity.

In terms of biological role, one of the primary rRNA binding proteins, it binds directly to 16S rRNA where it nucleates assembly of the body of the 30S subunit. Functionally, with S5 and S12 plays an important role in translational accuracy. This is Small ribosomal subunit protein uS4 from Chlorobium phaeovibrioides (strain DSM 265 / 1930) (Prosthecochloris vibrioformis (strain DSM 265)).